Reading from the N-terminus, the 115-residue chain is Large ribosomal subunit protein P2 (115 aa).

At Met-1 the chain carries N-acetylmethionine. 2 positions are modified to phosphoserine: Ser-17 and Ser-19. The residue at position 21 (Lys-21) is an N6-acetyllysine; alternate. At Lys-21 the chain carries N6-succinyllysine; alternate. The span at 69–90 (GAXAVAAAPGSXAPAAGSAPAA) shows a compositional bias: low complexity. Residues 69–115 (GAXAVAAAPGSXAPAAGSAPAAAEEKKEEKKEESEESDDDMGFGLFD) form a disordered region. Phosphoserine occurs at positions 79 and 86. A compositionally biased stretch (basic and acidic residues) spans 91 to 101 (AEEKKEEKKEE). 2 positions are modified to phosphoserine: Ser-102 and Ser-105.

It belongs to the eukaryotic ribosomal protein P1/P2 family. In terms of assembly, heterodimer with RPLP1 at the lateral ribosomal stalk of the large ribosomal subunit.

Plays an important role in the elongation step of protein synthesis. The polypeptide is Large ribosomal subunit protein P2 (RPLP2) (Sus scrofa (Pig)).